The sequence spans 151 residues: Macrodomain Ter protein (151 aa).

This sequence belongs to the MatP family. Homodimer.

The protein resides in the cytoplasm. In terms of biological role, required for spatial organization of the terminus region of the chromosome (Ter macrodomain) during the cell cycle. Prevents early segregation of duplicated Ter macrodomains during cell division. Binds specifically to matS, which is a 13 bp signature motif repeated within the Ter macrodomain. The sequence is that of Macrodomain Ter protein from Yersinia enterocolitica serotype O:8 / biotype 1B (strain NCTC 13174 / 8081).